The primary structure comprises 182 residues: ATP synthase subunit b, chloroplastic (182 aa).

Residues 33 to 55 traverse the membrane as a helical segment; it reads VLNIMLLLFGLIYVLKQFLGSLL.

This sequence belongs to the ATPase B chain family. As to quaternary structure, F-type ATPases have 2 components, F(1) - the catalytic core - and F(0) - the membrane proton channel. F(1) has five subunits: alpha(3), beta(3), gamma(1), delta(1), epsilon(1). F(0) has four main subunits: a(1), b(1), b'(1) and c(10-14). The alpha and beta chains form an alternating ring which encloses part of the gamma chain. F(1) is attached to F(0) by a central stalk formed by the gamma and epsilon chains, while a peripheral stalk is formed by the delta, b and b' chains.

The protein resides in the plastid. It is found in the chloroplast thylakoid membrane. Its function is as follows. F(1)F(0) ATP synthase produces ATP from ADP in the presence of a proton or sodium gradient. F-type ATPases consist of two structural domains, F(1) containing the extramembraneous catalytic core and F(0) containing the membrane proton channel, linked together by a central stalk and a peripheral stalk. During catalysis, ATP synthesis in the catalytic domain of F(1) is coupled via a rotary mechanism of the central stalk subunits to proton translocation. In terms of biological role, component of the F(0) channel, it forms part of the peripheral stalk, linking F(1) to F(0). The sequence is that of ATP synthase subunit b, chloroplastic from Antithamnion sp. (Red alga).